A 123-amino-acid polypeptide reads, in one-letter code: Succinate dehydrogenase assembly factor 3, mitochondrial (123 aa).

The transit peptide at 1–31 (MANPAHISAVRTLYKKILVLHRFLPIDLRAL) directs the protein to the mitochondrion.

This sequence belongs to the complex I LYR family. SDHAF3 subfamily. Interacts with sdhb within an sdha-sdhb subcomplex.

It localises to the mitochondrion matrix. In terms of biological role, plays an essential role in the assembly of succinate dehydrogenase (SDH), an enzyme complex (also referred to as respiratory complex II) that is a component of both the tricarboxylic acid (TCA) cycle and the mitochondrial electron transport chain, and which couples the oxidation of succinate to fumarate with the reduction of ubiquinone (coenzyme Q) to ubiquinol. Promotes maturation of the iron-sulfur protein subunit sdhb of the SDH catalytic dimer, protecting it from the deleterious effects of oxidants. May act together with SDHAF1. This is Succinate dehydrogenase assembly factor 3, mitochondrial from Danio rerio (Zebrafish).